A 409-amino-acid chain; its full sequence is Z-DNA-binding protein 1 (409 aa).

2 consecutive Z-binding domains span residues 8–70 and 85–147; these read LGTG…SLGG and SAAQ…TIYR. Residues Lys17 and Lys43 each participate in a glycyl lysine isopeptide (Lys-Gly) (interchain with G-Cter in ubiquitin) cross-link. Residues 59-87 form a disordered region; sequence SSPAPATWSLGGDGASGDGAPEIPEDSAA. Short sequence motifs (RIP homotypic interaction motif (RHIM)) lie at residues 183 to 207 and 241 to 265; these read NSLI…RQTI and LIHL…LERD. 2 disordered regions span residues 269–307 and 323–369; these read HPIF…GGTT and GNNN…TPSD. The segment covering 270 to 290 has biased composition (low complexity); the sequence is PIFSFSSSPPESTTTADPETA. A compositionally biased stretch (basic and acidic residues) spans 337-351; that stretch reads GTKESADSQELKEDT.

In terms of assembly, homodimer. Interacts (via RIP homotypic interaction motif) with RIPK3; leading to RIPK3 activation and necroptosis; interaction is enhanced by CASP6. Interacts (via RIP homotypic interaction motif) with RIPK1. Component of the AIM2 PANoptosome complex, a multiprotein complex that drives inflammatory cell death (PANoptosis). Post-translationally, ubiquitinated; polyubiquitinated following influenza A virus (IAV) infection. In terms of processing, phosphorylated.

Its subcellular location is the cytoplasm. The protein localises to the nucleus. With respect to regulation, ZBP1-dependent necroptosis is normally inhibited by RIPK1: RIPK1 inhibits the ZBP1-induced activation of RIPK3 via FADD-mediated recruitment of CASP8, which cleaves RIPK1 and limits TNF-induced necroptosis. Its function is as follows. Key innate sensor that recognizes and binds Z-RNA structures, which are produced by a number of viruses, such as herpesvirus, orthomyxovirus or flavivirus, and triggers different forms of cell death. ZBP1 acts as an essential mediator of pyroptosis, necroptosis and apoptosis (PANoptosis), an integral part of host defense against pathogens, by activating RIPK3, caspase-8 (CASP8), and the NLRP3 inflammasome. Key activator of necroptosis, a programmed cell death process in response to death-inducing TNF-alpha family members, via its ability to bind Z-RNA: once activated upon Z-RNA-binding, ZBP1 interacts and stimulates RIPK3 kinase, which phosphorylates and activates MLKL, triggering execution of programmed necrosis. In addition to TNF-induced necroptosis, necroptosis can also take place in the nucleus in response to orthomyxoviruses infection: ZBP1 recognizes and binds Z-RNA structures that are produced in infected nuclei by orthomyxoviruses, such as the influenza A virus (IAV), leading to ZBP1 activation, RIPK3 stimulation and subsequent MLKL phosphorylation, triggering disruption of the nuclear envelope and leakage of cellular DNA into the cytosol. ZBP1-dependent cell death in response to IAV infection promotes interleukin-1 alpha (IL1A) induction in an NLRP3-inflammasome-independent manner: IL1A expression is required for the optimal interleukin-1 beta (IL1B) production, and together, these cytokines promote infiltration of inflammatory neutrophils to the lung, leading to the formation of neutrophil extracellular traps. In addition to its direct role in driving necroptosis via its ability to sense Z-RNAs, also involved in PANoptosis triggered in response to bacterial infection: component of the AIM2 PANoptosome complex, a multiprotein complex that triggers PANoptosis. Also acts as the apical sensor of fungal infection responsible for activating PANoptosis. Involved in CASP8-mediated cell death via its interaction with RIPK1 but independently of its ability to sense Z-RNAs. In some cell types, also able to restrict viral replication by promoting cell death-independent responses. In response to flavivirus infection in neurons, promotes a cell death-independent pathway that restricts viral replication: together with RIPK3, promotes a death-independent transcriptional program that modifies the cellular metabolism via up-regulation expression of the enzyme ACOD1/IRG1 and production of the metabolite itaconate. Itaconate inhibits the activity of succinate dehydrogenase, generating a metabolic state in neurons that suppresses replication of viral genomes. This Rattus norvegicus (Rat) protein is Z-DNA-binding protein 1.